A 683-amino-acid chain; its full sequence is Leucine-rich repeat and calponin homology domain-containing protein 4 (683 aa).

Residues 1–18 (MAAAVAAPLAAGGEEAAA) are compositionally biased toward low complexity. The disordered stretch occupies residues 1–34 (MAAAVAAPLAAGGEEAAATTSVPGSPGLPGRRSA). LRR repeat units lie at residues 41-64 (AVAT…AARS), 67-90 (LSDI…ACQL), 92-113 (SLEG…LGNL), 114-136 (TALT…ICQL), 138-158 (LRVL…IGTL), 159-181 (GSLR…LCGL), 182-204 (SSLR…LGDL), 206-226 (LVRL…FCRL), and 227-250 (RHLQ…CLKG). Positions 268 to 292 (ALGDLAPSRPPSFSPCPAEDLFPGH) are disordered. Ser279, Ser281, Ser304, Ser307, Ser309, and Ser313 each carry phosphoserine. Disordered stretches follow at residues 326-436 (FRIS…LLKP) and 449-539 (STQA…DEKD). Basic and acidic residues-rich tracts occupy residues 330–345 (ELAR…KEDG), 357–376 (IDSH…EQRP), and 384–418 (GDRE…ERRQ). Residues Ser432 and Ser457 each carry the phosphoserine modification. Positions 449–460 (STQAMHNGSPKS) are enriched in polar residues. Composition is skewed to low complexity over residues 461 to 481 (SASQ…PASQ) and 511 to 524 (SSSQ…SPDS). A phosphoserine mark is found at Ser511, Ser513, Ser517, Ser521, and Ser589. Residues 534 to 647 (VPDEKDLMTQ…ALEAVKRVGG (114 aa)) enclose the Calponin-homology (CH) domain. Residues 653 to 673 (LWPPSGLGGFVVFYVVLMLLL) traverse the membrane as a helical segment.

The protein resides in the cell membrane. Accessory protein that regulates signaling by multiple TLRs, acting as a broad-spanning regulator of the innate immune response. In macrophages, binds LPS and promotes proper docking of LPS in lipid raft membrane. May be required for lipid raft maintenance. This is Leucine-rich repeat and calponin homology domain-containing protein 4 from Homo sapiens (Human).